The primary structure comprises 356 residues: Histidinol-phosphate aminotransferase (356 aa).

Residue K210 is modified to N6-(pyridoxal phosphate)lysine.

This sequence belongs to the class-II pyridoxal-phosphate-dependent aminotransferase family. Histidinol-phosphate aminotransferase subfamily. In terms of assembly, homodimer. It depends on pyridoxal 5'-phosphate as a cofactor.

It carries out the reaction L-histidinol phosphate + 2-oxoglutarate = 3-(imidazol-4-yl)-2-oxopropyl phosphate + L-glutamate. It functions in the pathway amino-acid biosynthesis; L-histidine biosynthesis; L-histidine from 5-phospho-alpha-D-ribose 1-diphosphate: step 7/9. This is Histidinol-phosphate aminotransferase from Gluconacetobacter diazotrophicus (strain ATCC 49037 / DSM 5601 / CCUG 37298 / CIP 103539 / LMG 7603 / PAl5).